Here is a 428-residue protein sequence, read N- to C-terminus: Enolase (428 aa).

Residue glutamine 163 participates in (2R)-2-phosphoglycerate binding. Glutamate 205 serves as the catalytic Proton donor. Positions 242, 285, and 312 each coordinate Mg(2+). Residues lysine 337, arginine 366, serine 367, and lysine 388 each contribute to the (2R)-2-phosphoglycerate site. Lysine 337 serves as the catalytic Proton acceptor.

This sequence belongs to the enolase family. Mg(2+) serves as cofactor.

It localises to the cytoplasm. Its subcellular location is the secreted. It is found in the cell surface. The catalysed reaction is (2R)-2-phosphoglycerate = phosphoenolpyruvate + H2O. It functions in the pathway carbohydrate degradation; glycolysis; pyruvate from D-glyceraldehyde 3-phosphate: step 4/5. Catalyzes the reversible conversion of 2-phosphoglycerate (2-PG) into phosphoenolpyruvate (PEP). It is essential for the degradation of carbohydrates via glycolysis. This Polynucleobacter asymbioticus (strain DSM 18221 / CIP 109841 / QLW-P1DMWA-1) (Polynucleobacter necessarius subsp. asymbioticus) protein is Enolase.